The sequence spans 165 residues: Transcriptional repressor NrdR (165 aa).

The segment at 3 to 34 is a zinc-finger region; sequence CPFCSANDTKVIDSRLVSDGHQVRRRRECLAC. One can recognise an ATP-cone domain in the interval 49 to 139; the sequence is PRIIKRDGSR…VYLSFEDISE (91 aa).

The protein belongs to the NrdR family. Requires Zn(2+) as cofactor.

Negatively regulates transcription of bacterial ribonucleotide reductase nrd genes and operons by binding to NrdR-boxes. This is Transcriptional repressor NrdR from Colwellia psychrerythraea (strain 34H / ATCC BAA-681) (Vibrio psychroerythus).